Consider the following 520-residue polypeptide: Anthranilate synthase component 1 (520 aa).

Residues S40, K50, and 291–293 (PYM) each bind L-tryptophan. 328–329 (GT) provides a ligand contact to chorismate. E361 is a Mg(2+) binding site. Residues Y449, R469, 483–485 (GAG), and G485 contribute to the chorismate site. Residue E498 coordinates Mg(2+).

It belongs to the anthranilate synthase component I family. In terms of assembly, homodimer. In fact, exists in a monomer-dimer equilibrium in solution, shifted spontaneously in favor of the dimer; the monomer has a reduced activity compared with the dimer. Heterotetramer consisting of two non-identical subunits: a beta subunit (TrpG) and a large alpha subunit (TrpE) (Potential). Mg(2+) serves as cofactor.

It catalyses the reaction chorismate + L-glutamine = anthranilate + pyruvate + L-glutamate + H(+). The protein operates within amino-acid biosynthesis; L-tryptophan biosynthesis; L-tryptophan from chorismate: step 1/5. Its activity is regulated as follows. Cooperatively feedback inhibited by tryptophan. Its function is as follows. Part of a heterotetrameric complex that catalyzes the two-step biosynthesis of anthranilate, an intermediate in the biosynthesis of L-tryptophan. In the first step, the glutamine-binding beta subunit (TrpG) of anthranilate synthase (AS) provides the glutamine amidotransferase activity which generates ammonia as a substrate that, along with chorismate, is used in the second step, catalyzed by the large alpha subunit of AS (TrpE) to produce anthranilate. In the absence of TrpG, TrpE can synthesize anthranilate directly from chorismate and high concentrations of ammonia. In Salmonella typhimurium (strain LT2 / SGSC1412 / ATCC 700720), this protein is Anthranilate synthase component 1 (trpE).